The chain runs to 386 residues: Protein phosphatase methylesterase 1 (386 aa).

The segment at 1 to 38 (MSALEKSMHLGRLPSRPPLPGSGGSQSGAKMRMGPGRK) is disordered. Ser-15 carries the phosphoserine modification. Arg-16 carries the post-translational modification Asymmetric dimethylarginine; alternate. Arg-16 carries the omega-N-methylarginine; alternate modification. Residue Ser-42 is modified to Phosphoserine. Residue Ser-156 is part of the active site. A compositionally biased stretch (acidic residues) spans 254–265 (IIEEEEEDEEGS). The segment at 254 to 280 (IIEEEEEDEEGSESISKRKKEDDMETK) is disordered. The span at 268–280 (ISKRKKEDDMETK) shows a compositional bias: basic and acidic residues. His-349 is a catalytic residue.

This sequence belongs to the AB hydrolase superfamily. As to quaternary structure, binds PPP2CA and PPP2CB. Post-translationally, phosphorylated by SIK1 following increases in intracellular sodium, leading to dissociation from the protein phosphatase 2A (PP2A) complex and subsequent dephosphorylation of sodium/potassium-transporting ATPase ATP1A1.

The catalysed reaction is [phosphatase 2A protein]-C-terminal L-leucine methyl ester + H2O = [phosphatase 2A protein]-C-terminal L-leucine + methanol + H(+). Demethylates proteins that have been reversibly carboxymethylated. Demethylates PPP2CB (in vitro) and PPP2CA. Binding to PPP2CA displaces the manganese ion and inactivates the enzyme. The protein is Protein phosphatase methylesterase 1 (PPME1) of Pongo abelii (Sumatran orangutan).